An 864-amino-acid polypeptide reads, in one-letter code: MTIPELPLGGIVSQAVELGAPYEPPLTPDHPEWKVHVPAAAVDKKDQDTPDNWVRRDPRILRLTGRHPLNCEPPMDVLMEYGFITPPAVHFVRNHGAAPRIPWAEHRIEINGLVDKPLFLTMDELVALPSITFPCTLVCAGNRRKEENMLKKSIGFNWGPCATSTTYWTGVRLRDLLLLAGIKSPEQGANFVCFRGPKGELPRGSDGSYGTSLTYAKAMDPSSDVIIAYKQNHRWLTPDHGFPVRMIIPGFIGGRMVKWLSEITVTEVESQNFYHFMDNRVLPSHVDEALAKEEGWWYKPEFIINDLNINSAVARPWHDEVVRLDANKPYTMRGYAYAGGGRKIIRCEVSLDDGKTWRLGDIQRFEKPNEYGKYWCWVHWSLDVMTFDFLNAKEVLLRAWDETMNTQPAIITWNVMGMMNNCYYRIKIHPQVDSDGVMGLRFQHPAPVELGERGNMGWREEDNLVAQALAAVKEGATAAAAPAAPPPVVAAAANGGPRQYTMEEVAAHNTEESCWFVHGGKVYDATPYLDEHPGGAESILIVAGADATDEFNSIHSSKAKAMLAQYYIGDLVASKPAAAGATVPEPQPVASTSSPAVDPLVVLNPRQKVKLPLIERIELNRNTRIFRFGLPSPQHRIGLPVGKHVFTYATINGENVMRAYTPISGDEELGRLDMLIKVYFANEHPAFPDGGKMSQHFESLRIGDTVEFKGPLGHFVYDGRGSYTLNGKLHKHATHMSFVAGGTGITPCYAVIKAALRDPEDKTQISLVFANNTEEDILLREELDELANNHPDRFHLWHTVSQTNSSDWKFSTGRVTLEMFKQHLFACSGPECLALMCGPPAMLEHCCVPFLESMGYSKEQMIHF.

Residue C139 participates in Mo-molybdopterin binding. The Cytochrome b5 heme-binding domain occupies 497–572 (PRQYTMEEVA…LAQYYIGDLV (76 aa)). Positions 532 and 555 each coordinate heme. One can recognise an FAD-binding FR-type domain in the interval 606–718 (RQKVKLPLIE…KGPLGHFVYD (113 aa)). FAD contacts are provided by residues 658-661 (RAYT), 675-679 (LIKVY), F680, F687, 692-694 (KMS), and T746.

It belongs to the nitrate reductase family. In terms of assembly, homodimer. FAD is required as a cofactor. It depends on heme as a cofactor. Mo-molybdopterin serves as cofactor.

The catalysed reaction is nitrite + NAD(+) + H2O = nitrate + NADH + H(+). Nitrate reductase is a key enzyme involved in the first step of nitrate assimilation in plants, fungi and bacteria. The protein is Nitrate reductase [NADH] (NITA) of Volvox carteri (Green alga).